Reading from the N-terminus, the 268-residue chain is Zinc transporter ZupT (268 aa).

Helical transmembrane passes span 6–26 (IIFAFSLTLFAGLATGVGGVI), 37–57 (FLAGSLGFSVGVMLFVSFVEI), 73–93 (GGNWAATGAFFAGIALIAVID), 126–146 (VLTAIAISIHNFPEGFATFVA), 153–173 (IAIPVAVAIAIHNIPEGIAVA), 189–209 (WATLSGLAEPAGAVVGFILLM), 211–231 (FLGPEAMGLSFAAVAGIMVFI), and 248–268 (TAIYGLVGGMAVMAVSLLLFI). Positions 136 and 139 each coordinate Fe(2+). Zn(2+) contacts are provided by E139 and H164. Positions 165, 168, and 197 each coordinate Fe(2+). E168 is a Zn(2+) binding site.

The protein belongs to the ZIP transporter (TC 2.A.5) family. ZupT subfamily.

The protein localises to the cell membrane. The catalysed reaction is Zn(2+)(in) = Zn(2+)(out). Its function is as follows. Mediates zinc uptake. May also transport other divalent cations. The protein is Zinc transporter ZupT of Corynebacterium efficiens (strain DSM 44549 / YS-314 / AJ 12310 / JCM 11189 / NBRC 100395).